A 265-amino-acid polypeptide reads, in one-letter code: 3-methyl-2-oxobutanoate hydroxymethyltransferase (265 aa).

2 residues coordinate Mg(2+): aspartate 45 and aspartate 84. 3-methyl-2-oxobutanoate contacts are provided by residues 45 to 46 (DS), aspartate 84, and lysine 112. Mg(2+) is bound at residue glutamate 114. Residue glutamate 181 is the Proton acceptor of the active site.

The protein belongs to the PanB family. In terms of assembly, homodecamer; pentamer of dimers. Requires Mg(2+) as cofactor.

It is found in the cytoplasm. It carries out the reaction 3-methyl-2-oxobutanoate + (6R)-5,10-methylene-5,6,7,8-tetrahydrofolate + H2O = 2-dehydropantoate + (6S)-5,6,7,8-tetrahydrofolate. It participates in cofactor biosynthesis; (R)-pantothenate biosynthesis; (R)-pantoate from 3-methyl-2-oxobutanoate: step 1/2. Functionally, catalyzes the reversible reaction in which hydroxymethyl group from 5,10-methylenetetrahydrofolate is transferred onto alpha-ketoisovalerate to form ketopantoate. This chain is 3-methyl-2-oxobutanoate hydroxymethyltransferase, found in Pseudoalteromonas atlantica (strain T6c / ATCC BAA-1087).